Consider the following 132-residue polypeptide: MVMTDPIADLLTRVRNANSVRHEVVEVPSSSVKKAIVNILLQEGYLKGVEEYNDGVVPMMRLTLKYGANNERVITGLKRISKPGLRVYCKKDEVPRVLNGLGIALISTSKGLVVDREARKLGLGGEVICYVW.

It belongs to the universal ribosomal protein uS8 family. Part of the 30S ribosomal subunit. Contacts proteins S5 and S12.

Its function is as follows. One of the primary rRNA binding proteins, it binds directly to 16S rRNA central domain where it helps coordinate assembly of the platform of the 30S subunit. The chain is Small ribosomal subunit protein uS8 from Clostridium perfringens (strain ATCC 13124 / DSM 756 / JCM 1290 / NCIMB 6125 / NCTC 8237 / Type A).